Here is a 313-residue protein sequence, read N- to C-terminus: Protein EMSY-LIKE 2 (313 aa).

The ENT domain occupies 1–88; sequence MEAQIHILEQ…HQSLDVHPSP (88 aa). Residues 35–58 are a coiled coil; the sequence is MTNLRKELRISDDENRQLLNNVHN. Disordered regions lie at residues 84–106 and 195–229; these read VHPSPTFSASRKKQKTFQSYPSI and LNVGHGGGTTRGNRRTLSHGGRGRGPRTQPRREHL. Positions 206–219 are enriched in basic residues; it reads GNRRTLSHGGRGRG. A coiled-coil region spans residues 267-293; it reads HELDKAKKLLKEHEQALIAAIARLTDA. Ser-294 is subject to Phosphoserine. The segment at 294–313 is disordered; that stretch reads SDYESDGEEPYSHELPMLLG.

In terms of assembly, interacts with EDM2 in nucleus.

It is found in the nucleus. Functionally, probably involved in the regulation of chromatin states. Contributes to RPP7-mediated and basal immunity, especially against Hyaloperonospora arabidopsidis isolate Hiks1. Regulates negatively EDM2-dependent floral transition. The sequence is that of Protein EMSY-LIKE 2 from Arabidopsis thaliana (Mouse-ear cress).